Consider the following 359-residue polypeptide: 3-dehydroquinate synthase (359 aa).

NAD(+) is bound by residues 72–77 (EGEIHK), 106–110 (GVIGD), 130–131 (TS), Lys143, Lys152, and 170–173 (CLKT). Zn(2+)-binding residues include Glu185, His248, and His264.

Belongs to the sugar phosphate cyclases superfamily. Dehydroquinate synthase family. Co(2+) serves as cofactor. The cofactor is Zn(2+). Requires NAD(+) as cofactor.

The protein resides in the cytoplasm. It catalyses the reaction 7-phospho-2-dehydro-3-deoxy-D-arabino-heptonate = 3-dehydroquinate + phosphate. Its pathway is metabolic intermediate biosynthesis; chorismate biosynthesis; chorismate from D-erythrose 4-phosphate and phosphoenolpyruvate: step 2/7. In terms of biological role, catalyzes the conversion of 3-deoxy-D-arabino-heptulosonate 7-phosphate (DAHP) to dehydroquinate (DHQ). The protein is 3-dehydroquinate synthase of Dehalococcoides mccartyi (strain CBDB1).